The sequence spans 124 residues: Fluoride-specific ion channel FluC (124 aa).

A run of 4 helical transmembrane segments spans residues 4–24 (VLYI…LSGW), 32–52 (AFPY…GLIM), 67–87 (IGLT…SYET), and 101–121 (ANVL…IIVA). The Na(+) site is built by Gly75 and Thr78.

It belongs to the fluoride channel Fluc/FEX (TC 1.A.43) family.

Its subcellular location is the cell inner membrane. It catalyses the reaction fluoride(in) = fluoride(out). With respect to regulation, na(+) is not transported, but it plays an essential structural role and its presence is essential for fluoride channel function. In terms of biological role, fluoride-specific ion channel. Important for reducing fluoride concentration in the cell, thus reducing its toxicity. The polypeptide is Fluoride-specific ion channel FluC (Geotalea uraniireducens (strain Rf4) (Geobacter uraniireducens)).